Reading from the N-terminus, the 407-residue chain is tRNA(Ile)-lysidine synthase (407 aa).

36–41 (SGGRDS) is a binding site for ATP.

This sequence belongs to the tRNA(Ile)-lysidine synthase family.

The protein resides in the cytoplasm. The enzyme catalyses cytidine(34) in tRNA(Ile2) + L-lysine + ATP = lysidine(34) in tRNA(Ile2) + AMP + diphosphate + H(+). In terms of biological role, ligates lysine onto the cytidine present at position 34 of the AUA codon-specific tRNA(Ile) that contains the anticodon CAU, in an ATP-dependent manner. Cytidine is converted to lysidine, thus changing the amino acid specificity of the tRNA from methionine to isoleucine. This chain is tRNA(Ile)-lysidine synthase, found in Tropheryma whipplei (strain TW08/27) (Whipple's bacillus).